A 467-amino-acid polypeptide reads, in one-letter code: Translation initiation factor eIF2B subunit delta (467 aa).

The tract at residues 1–106 (MGFSAEQAKK…QNPQNSPETD (106 aa)) is disordered. Phosphoserine is present on residues Ser16, Ser19, Ser21, and Ser23. Polar residues predominate over residues 16–37 (SPVSESSSVGGTSPATASSVVS). The residue at position 27 (Thr27) is a Phosphothreonine. Phosphoserine is present on residues Ser28 and Ser37. Residues 51-61 (LKKARKQASRR) show a composition bias toward basic residues. Low complexity predominate over residues 84-102 (PNKNSNQQKKASKQNPQNS).

Belongs to the eIF-2B alpha/beta/delta subunits family. In terms of assembly, component of the translation initiation factor 2B (eIF2B) complex which is a heterodecamer of two sets of five different subunits: alpha, beta, gamma, delta and epsilon. Subunits alpha, beta and delta comprise a regulatory subcomplex and subunits epsilon and gamma comprise a catalytic subcomplex. Within the complex, the hexameric regulatory complex resides at the center, with the two heterodimeric catalytic subcomplexes bound on opposite sides.

It localises to the cytoplasm. The protein localises to the cytosol. Acts as a component of the translation initiation factor 2B (eIF2B) complex, which catalyzes the exchange of GDP for GTP on the eukaryotic initiation factor 2 (eIF2) complex gamma subunit. Its guanine nucleotide exchange factor activity is repressed when bound to eIF2 complex phosphorylated on the alpha subunit, thereby limiting the amount of methionyl-initiator methionine tRNA available to the ribosome and consequently global translation is repressed. In Schizosaccharomyces pombe (strain 972 / ATCC 24843) (Fission yeast), this protein is Translation initiation factor eIF2B subunit delta (tif224).